The primary structure comprises 236 residues: Truncated formate dehydrogenase 2 (236 aa).

Residues R36–I37, D57, P104–D108, T130, D156, and H185–G188 contribute to the NAD(+) site.

The protein belongs to the D-isomer specific 2-hydroxyacid dehydrogenase family. FDH subfamily.

This chain is Truncated formate dehydrogenase 2, found in Saccharomyces cerevisiae (strain ATCC 204508 / S288c) (Baker's yeast).